A 288-amino-acid polypeptide reads, in one-letter code: Nucleotide-binding protein NE1849 (288 aa).

8–15 (GLSGSGKS) provides a ligand contact to ATP. 57–60 (DMRS) lines the GTP pocket.

This sequence belongs to the RapZ-like family.

Functionally, displays ATPase and GTPase activities. The sequence is that of Nucleotide-binding protein NE1849 from Nitrosomonas europaea (strain ATCC 19718 / CIP 103999 / KCTC 2705 / NBRC 14298).